We begin with the raw amino-acid sequence, 756 residues long: Catalase-peroxidase (756 aa).

A cross-link (tryptophyl-tyrosyl-methioninium (Trp-Tyr) (with M-270)) is located at residues 91-244 (WHSAGTYRTG…LAAVQMGLIY (154 aa)). The Proton acceptor role is filled by His-92. A disordered region spans residues 198-230 (AQKKMQQPGDGTLVAEPENHANEESRTASGERN). A compositionally biased stretch (basic and acidic residues) spans 214–223 (PENHANEESR). A cross-link (tryptophyl-tyrosyl-methioninium (Tyr-Met) (with W-91)) is located at residues 244–270 (YVNPEGPEGVPDPVASARDIRETFGRM). His-285 contacts heme b.

The protein belongs to the peroxidase family. Peroxidase/catalase subfamily. In terms of assembly, homodimer or homotetramer. Heme b is required as a cofactor. Post-translationally, formation of the three residue Trp-Tyr-Met cross-link is important for the catalase, but not the peroxidase activity of the enzyme.

The enzyme catalyses H2O2 + AH2 = A + 2 H2O. It catalyses the reaction 2 H2O2 = O2 + 2 H2O. Functionally, bifunctional enzyme with both catalase and broad-spectrum peroxidase activity. The sequence is that of Catalase-peroxidase from Pseudomonas syringae pv. syringae (strain B728a).